We begin with the raw amino-acid sequence, 337 residues long: Fructose-1,6-bisphosphatase class 1 (337 aa).

Residues Glu-94, Asp-116, Leu-118, and Asp-119 each coordinate Mg(2+). Residues 119 to 122 (DGSS), Asn-210, and Lys-276 contribute to the substrate site. A Mg(2+)-binding site is contributed by Glu-282.

This sequence belongs to the FBPase class 1 family. In terms of assembly, homotetramer. Requires Mg(2+) as cofactor.

The protein resides in the cytoplasm. It carries out the reaction beta-D-fructose 1,6-bisphosphate + H2O = beta-D-fructose 6-phosphate + phosphate. It participates in carbohydrate biosynthesis; gluconeogenesis. The polypeptide is Fructose-1,6-bisphosphatase class 1 (Burkholderia cenocepacia (strain HI2424)).